A 206-amino-acid polypeptide reads, in one-letter code: Pyridoxine/pyridoxamine 5'-phosphate oxidase (206 aa).

FMN is bound by residues 53-58 (RMVLLK), 68-69 (YT), Lys-75, and Gln-97. Lys-58 contacts substrate. Positions 115, 119, and 123 each coordinate substrate. Residues 132 to 133 (QS) and Trp-177 each bind FMN. Residue 183 to 185 (RLH) participates in substrate binding. Residue Arg-187 coordinates FMN.

It belongs to the pyridoxamine 5'-phosphate oxidase family. In terms of assembly, homodimer. FMN serves as cofactor.

The catalysed reaction is pyridoxamine 5'-phosphate + O2 + H2O = pyridoxal 5'-phosphate + H2O2 + NH4(+). The enzyme catalyses pyridoxine 5'-phosphate + O2 = pyridoxal 5'-phosphate + H2O2. It functions in the pathway cofactor metabolism; pyridoxal 5'-phosphate salvage; pyridoxal 5'-phosphate from pyridoxamine 5'-phosphate: step 1/1. Its pathway is cofactor metabolism; pyridoxal 5'-phosphate salvage; pyridoxal 5'-phosphate from pyridoxine 5'-phosphate: step 1/1. Its function is as follows. Catalyzes the oxidation of either pyridoxine 5'-phosphate (PNP) or pyridoxamine 5'-phosphate (PMP) into pyridoxal 5'-phosphate (PLP). The chain is Pyridoxine/pyridoxamine 5'-phosphate oxidase from Rhizobium johnstonii (strain DSM 114642 / LMG 32736 / 3841) (Rhizobium leguminosarum bv. viciae).